Here is an 895-residue protein sequence, read N- to C-terminus: Androgen receptor (895 aa).

The segment at 1–533 (MEVQLGLGRV…PIDYYFPPQK (533 aa)) is modulating. Residues 1 to 562 (MEVQLGLGRV…GSCKVFFKRA (562 aa)) are interaction with ZNF318. 2 disordered regions span residues 33-150 (VIQN…LSLL) and 178-211 (QQQQQEAVSEGSSSGRAREASGAPTSSKDNYLEG). 2 stretches are compositionally biased toward low complexity: residues 44–81 (AASAAPPGASLQQQQQQQQETSPRQQQQQQQGEDGSPQ) and 178–200 (QQQQQEAVSEGSSSGRAREASGA). Residue Ser-65 is modified to Phosphoserine; by CDK9. Ser-79 bears the Phosphoserine mark. Over residues 201–211 (PTSSKDNYLEG) the composition is skewed to polar residues. The residue at position 208 (Tyr-208) is a Phosphotyrosine; by CSK. Ser-241 carries the post-translational modification Phosphoserine. Position 252 is a phosphotyrosine; by CSK and TNK2 (Tyr-252). Residues Tyr-292, Tyr-331, Tyr-342, and Tyr-347 each carry the phosphotyrosine; by CSK modification. Tyr-348 carries the post-translational modification Phosphotyrosine; by CSK and TNK2. Residue Lys-371 forms a Glycyl lysine isopeptide (Lys-Gly) (interchain with G-Cter in SUMO) linkage. A Phosphotyrosine; by CSK modification is found at Tyr-378. Lys-496 participates in a covalent cross-link: Glycyl lysine isopeptide (Lys-Gly) (interchain with G-Cter in SUMO). Phosphotyrosine; by CSK is present on residues Tyr-510 and Tyr-527. The interaction with LPXN stretch occupies residues 527–894 (YYFPPQKTCL…GKVKPIYFHT (368 aa)). The nuclear receptor DNA-binding region spans 534-607 (TCLICGDEAS…AGMTLGARKL (74 aa)). NR C4-type zinc fingers lie at residues 535–555 (CLICGDEASGCHYGALTCGSC) and 571–595 (CASRNDCTIDKFRRKNCPSCRLRKC). Residues 547–637 (YGALTCGSCK…TEETAQKLTV (91 aa)) are interaction with HIPK3. The interaction with CCAR1 stretch occupies residues 567 to 894 (QKYLCASRND…GKVKPIYFHT (328 aa)). The tract at residues 600 to 894 (MTLGARKLKK…GKVKPIYFHT (295 aa)) is interaction with KAT7. Ser-626 is subject to Phosphoserine; by STK4/MST1. In terms of domain architecture, NR LBD spans 644–875 (ECQPIFLNVL…DFPEMMAEII (232 aa)). The 17beta-hydroxy-5alpha-androstan-3-one site is built by Asn-681 and Arg-728. Residues Lys-821 and Lys-823 each participate in a glycyl lysine isopeptide (Lys-Gly) (interchain with G-Cter in ubiquitin) cross-link. Thr-853 is a binding site for 17beta-hydroxy-5alpha-androstan-3-one. A Phosphotyrosine; by CSK modification is found at Tyr-891.

The protein belongs to the nuclear hormone receptor family. NR3 subfamily. As to quaternary structure, binds DNA as a homodimer. Part of a ternary complex containing AR, EFCAB6/DJBP and PARK7. Interacts with HIPK3 and NR0B2 in the presence of androgen. The ligand binding domain interacts with KAT7/HBO1 in the presence of dihydrotestosterone. Interacts with EFCAB6/DJBP, PQBP1, RANBP9, RBAK, SPDEF, SRA1, TGFB1I1 and RREB1. Interacts with ZMIZ1/ZIMP10 and ZMIZ2/ZMIP7 which both enhance its transactivation activity. Interacts with SLC30A9 and RAD54L2/ARIP4. Interacts with MACROD1 (via macro domain). Interacts via the ligand-binding domain with LXXLL and FXXLF motifs from NCOA1, NCOA2, NCOA3 and MAGEA11. Interacts (via nuclear receptor DNA binding domain and nuclear receptor ligand binding domain) with NCOA4. The AR N-terminal poly-Gln region binds Ran resulting in enhancement of AR-mediated transactivation. Ran-binding decreases as the poly-Gln length increases. Interacts with HIP1 (via coiled coil domain). Interacts (via ligand-binding domain) with TRIM68. Interacts with TNK2. Interacts with USP26. Interacts with RNF6. Interacts (regulated by RNF6 probably through polyubiquitination) with RNF14; regulates AR transcriptional activity. Interacts with PRMT2 and TRIM24. Interacts with RACK1. Interacts with RANBP10; this interaction enhances dihydrotestosterone-induced AR transcriptional activity. Interacts with PRPF6 in a hormone-independent way; this interaction enhances dihydrotestosterone-induced AR transcriptional activity. Interacts with STK4/MST1. Interacts with ZIPK/DAPK3. Interacts with LPXN. Interacts with MAK. Part of a complex containing AR, MAK and NCOA3. Interacts with CRY1. Interacts with CCAR1 and GATA2. Interacts with ZNF318. Interacts with BUD31. Interacts with ARID4A. Interacts with ARID4B. Interacts (via NR LBD domain) with ZBTB7A; the interaction is direct and androgen-dependent. Interacts with NCOR1. Interacts with NCOR2. Interacts with CRY2 in a ligand-dependent manner. In terms of processing, phosphorylated in prostate cancer cells in response to several growth factors including EGF. Phosphorylation is induced by c-Src kinase (CSK). Tyr-510 is one of the major phosphorylation sites and an increase in phosphorylation and Src kinase activity is associated with prostate cancer progression. Phosphorylation by TNK2 enhances the DNA-binding and transcriptional activity. Phosphorylation at Ser-65 by CDK9 regulates AR promoter selectivity and cell growth. Sumoylated on Lys-371 (major) and Lys-496. Ubiquitinated. Deubiquitinated by USP26. 'Lys-6' and 'Lys-27'-linked polyubiquitination by RNF6 modulates AR transcriptional activity and specificity. Post-translationally, palmitoylated by ZDHHC7 and ZDHHC21. Palmitoylation is required for plasma membrane targeting and for rapid intracellular signaling via ERK and AKT kinases and cAMP generation.

The protein resides in the nucleus. It localises to the cytoplasm. Steroid hormone receptors are ligand-activated transcription factors that regulate eukaryotic gene expression and affect cellular proliferation and differentiation in target tissues. Transcription factor activity is modulated by bound coactivator and corepressor proteins like ZBTB7A that recruits NCOR1 and NCOR2 to the androgen response elements/ARE on target genes, negatively regulating androgen receptor signaling and androgen-induced cell proliferation. Transcription activation is also down-regulated by NR0B2. Activated, but not phosphorylated, by HIPK3 and ZIPK/DAPK3. The sequence is that of Androgen receptor (AR) from Macaca mulatta (Rhesus macaque).